Reading from the N-terminus, the 407-residue chain is Multifunctional CCA protein (407 aa).

Residues glycine 8 and arginine 11 each contribute to the ATP site. CTP contacts are provided by glycine 8 and arginine 11. Residues aspartate 21 and aspartate 23 each coordinate Mg(2+). ATP contacts are provided by arginine 91, arginine 137, and arginine 140. 3 residues coordinate CTP: arginine 91, arginine 137, and arginine 140. In terms of domain architecture, HD spans 225-326 (CGDHVMRVLD…LRLLKDCDAL (102 aa)).

The protein belongs to the tRNA nucleotidyltransferase/poly(A) polymerase family. Bacterial CCA-adding enzyme type 1 subfamily. In terms of assembly, monomer. Can also form homodimers and oligomers. The cofactor is Mg(2+). Ni(2+) is required as a cofactor.

It catalyses the reaction a tRNA precursor + 2 CTP + ATP = a tRNA with a 3' CCA end + 3 diphosphate. The catalysed reaction is a tRNA with a 3' CCA end + 2 CTP + ATP = a tRNA with a 3' CCACCA end + 3 diphosphate. Catalyzes the addition and repair of the essential 3'-terminal CCA sequence in tRNAs without using a nucleic acid template. Adds these three nucleotides in the order of C, C, and A to the tRNA nucleotide-73, using CTP and ATP as substrates and producing inorganic pyrophosphate. tRNA 3'-terminal CCA addition is required both for tRNA processing and repair. Also involved in tRNA surveillance by mediating tandem CCA addition to generate a CCACCA at the 3' terminus of unstable tRNAs. While stable tRNAs receive only 3'-terminal CCA, unstable tRNAs are marked with CCACCA and rapidly degraded. The sequence is that of Multifunctional CCA protein from Chromobacterium violaceum (strain ATCC 12472 / DSM 30191 / JCM 1249 / CCUG 213 / NBRC 12614 / NCIMB 9131 / NCTC 9757 / MK).